Here is a 95-residue protein sequence, read N- to C-terminus: Putative regulatory protein Pmob_0099 (95 aa).

It belongs to the RemA family.

The chain is Putative regulatory protein Pmob_0099 from Petrotoga mobilis (strain DSM 10674 / SJ95).